Reading from the N-terminus, the 130-residue chain is Small ribosomal subunit protein uS8 (130 aa).

Belongs to the universal ribosomal protein uS8 family. As to quaternary structure, part of the 30S ribosomal subunit. Contacts proteins S5 and S12.

In terms of biological role, one of the primary rRNA binding proteins, it binds directly to 16S rRNA central domain where it helps coordinate assembly of the platform of the 30S subunit. This chain is Small ribosomal subunit protein uS8, found in Edwardsiella ictaluri (strain 93-146).